Consider the following 328-residue polypeptide: Methionyl-tRNA formyltransferase (328 aa).

Residue 121–124 (SLLP) participates in (6S)-5,6,7,8-tetrahydrofolate binding.

It belongs to the Fmt family.

The enzyme catalyses L-methionyl-tRNA(fMet) + (6R)-10-formyltetrahydrofolate = N-formyl-L-methionyl-tRNA(fMet) + (6S)-5,6,7,8-tetrahydrofolate + H(+). Attaches a formyl group to the free amino group of methionyl-tRNA(fMet). The formyl group appears to play a dual role in the initiator identity of N-formylmethionyl-tRNA by promoting its recognition by IF2 and preventing the misappropriation of this tRNA by the elongation apparatus. In Paraburkholderia xenovorans (strain LB400), this protein is Methionyl-tRNA formyltransferase.